The primary structure comprises 491 residues: Argininosuccinate lyase (491 aa).

Belongs to the lyase 1 family. Argininosuccinate lyase subfamily.

The protein localises to the cytoplasm. It catalyses the reaction 2-(N(omega)-L-arginino)succinate = fumarate + L-arginine. It functions in the pathway amino-acid biosynthesis; L-arginine biosynthesis; L-arginine from L-ornithine and carbamoyl phosphate: step 3/3. The chain is Argininosuccinate lyase from Methanosarcina barkeri (strain Fusaro / DSM 804).